A 432-amino-acid polypeptide reads, in one-letter code: Glutamyl-tRNA reductase (432 aa).

Substrate is bound by residues 49–52 (TCNR), Ser107, 112–114 (ETQ), and Gln118. Cys50 serves as the catalytic Nucleophile. Residue 186 to 191 (GAGEMG) participates in NADP(+) binding.

The protein belongs to the glutamyl-tRNA reductase family. Homodimer.

The enzyme catalyses (S)-4-amino-5-oxopentanoate + tRNA(Glu) + NADP(+) = L-glutamyl-tRNA(Glu) + NADPH + H(+). The protein operates within porphyrin-containing compound metabolism; protoporphyrin-IX biosynthesis; 5-aminolevulinate from L-glutamyl-tRNA(Glu): step 1/2. In terms of biological role, catalyzes the NADPH-dependent reduction of glutamyl-tRNA(Glu) to glutamate 1-semialdehyde (GSA). In Campylobacter jejuni subsp. jejuni serotype O:6 (strain 81116 / NCTC 11828), this protein is Glutamyl-tRNA reductase.